Reading from the N-terminus, the 349-residue chain is Dihydroorotase (349 aa).

Zn(2+)-binding residues include histidine 17 and histidine 19. Substrate-binding positions include 19–21 and asparagine 45; that span reads HLR. Residues lysine 103, histidine 140, and histidine 178 each contribute to the Zn(2+) site. Lysine 103 is modified (N6-carboxylysine). Histidine 140 is a binding site for substrate. Leucine 224 is a substrate binding site. Aspartate 252 serves as a coordination point for Zn(2+). Aspartate 252 is an active-site residue. Substrate-binding residues include histidine 256 and alanine 268.

The protein belongs to the metallo-dependent hydrolases superfamily. DHOase family. Class II DHOase subfamily. Homodimer. Zn(2+) serves as cofactor.

It catalyses the reaction (S)-dihydroorotate + H2O = N-carbamoyl-L-aspartate + H(+). It participates in pyrimidine metabolism; UMP biosynthesis via de novo pathway; (S)-dihydroorotate from bicarbonate: step 3/3. Its function is as follows. Catalyzes the reversible cyclization of carbamoyl aspartate to dihydroorotate. The protein is Dihydroorotase of Buchnera aphidicola subsp. Schizaphis graminum (strain Sg).